The chain runs to 326 residues: Ribose operon repressor (326 aa).

The HTH lacI-type domain maps to 1–56; it reads MATIKDVAGAAGVSVATVSRNLNDNGYVHEETRTRVIAAMAKLNYYPNEVARSLYK. A DNA-binding region (H-T-H motif) is located at residues 4–23; the sequence is IKDVAGAAGVSVATVSRNLN.

Functionally, transcriptional repressor for the ribose rbsDACBK operon. This Bacillus subtilis (strain 168) protein is Ribose operon repressor (rbsR).